We begin with the raw amino-acid sequence, 355 residues long: 3-dehydroquinate synthase (355 aa).

NAD(+)-binding positions include 98 to 102 (GVIGD), 122 to 123 (TT), lysine 135, lysine 144, and 162 to 165 (TLNT). Positions 177, 240, and 257 each coordinate Zn(2+).

The protein belongs to the sugar phosphate cyclases superfamily. Dehydroquinate synthase family. Co(2+) is required as a cofactor. Zn(2+) serves as cofactor. The cofactor is NAD(+).

It is found in the cytoplasm. The catalysed reaction is 7-phospho-2-dehydro-3-deoxy-D-arabino-heptonate = 3-dehydroquinate + phosphate. It participates in metabolic intermediate biosynthesis; chorismate biosynthesis; chorismate from D-erythrose 4-phosphate and phosphoenolpyruvate: step 2/7. Catalyzes the conversion of 3-deoxy-D-arabino-heptulosonate 7-phosphate (DAHP) to dehydroquinate (DHQ). The chain is 3-dehydroquinate synthase from Dictyoglomus thermophilum (strain ATCC 35947 / DSM 3960 / H-6-12).